A 172-amino-acid chain; its full sequence is Adenylate kinase isoenzyme 6 (172 aa).

The ATP site is built by Gly-13, Gly-15, Lys-16, Thr-17, and Thr-18. The segment at 33-56 (NVGDLAREGELYDGFDEEYNCPIL) is NMPbind. The interval 108 to 118 (TRGYSEKKLND) is LID. Residues Arg-109 and Lys-148 each coordinate ATP.

The protein belongs to the adenylate kinase family. AK6 subfamily. In terms of assembly, monomer and homodimer. Interacts with small ribosomal subunit protein uS11. Not a structural component of 43S pre-ribosomes, but transiently interacts with them by binding to uS11. Interacts with COIL (via C-terminus).

It localises to the cytoplasm. It is found in the nucleus. Its subcellular location is the nucleoplasm. The protein localises to the cajal body. The catalysed reaction is AMP + ATP = 2 ADP. The enzyme catalyses ATP + H2O = ADP + phosphate + H(+). In terms of biological role, broad-specificity nucleoside monophosphate (NMP) kinase that catalyzes the reversible transfer of the terminal phosphate group between nucleoside triphosphates and monophosphates. Also has ATPase activity. Involved in the late cytoplasmic maturation steps of the 40S ribosomal particles, specifically 18S rRNA maturation. While NMP activity is not required for ribosome maturation, ATPase activity is. Associates transiently with small ribosomal subunit protein uS11. ATP hydrolysis breaks the interaction with uS11. May temporarily remove uS11 from the ribosome to enable a conformational change of the ribosomal RNA that is needed for the final maturation step of the small ribosomal subunit. Its NMP activity may have a role in nuclear energy homeostasis. May be involved in regulation of Cajal body (CB) formation. This is Adenylate kinase isoenzyme 6 from Oryctolagus cuniculus (Rabbit).